The chain runs to 53 residues: Alpha-1-antiproteinase 1 (53 aa).

A disordered region spans residues 1 to 28; sequence EDLQGDAVPETSATKDDNEXPEMIPMSL.

It belongs to the serpin family. Post-translationally, N-glycosylated; contains biantennary glycans. As to expression, plasma.

It localises to the secreted. This is Alpha-1-antiproteinase 1 from Equus caballus (Horse).